An 889-amino-acid polypeptide reads, in one-letter code: MAATAASTMSAAAAVTRRINAALRVDATSGDVAAGADGQNGRRSPVAKRVNDGGGGKDDVWVAVDEKDVCGARGGDGAARPPLFRTYKVKGSILHPYRFLILLRLIAIVAFFAWRVRHKNRDGVWLWTMSMVGDVWFGFSWVLNQLPKLSPIKRVPDLAALADRHSGDLPGVDVFVTTVDPVDEPILYTVNTILSILAADYPVDRYACYLSDDGGTLVHYEAMVEVAKFAELWVPFCRKHCVEPRSPENYFAMKTQAYKGGVPGELMSDHRRVRREYEEFKVRIDSLSSTIRQRSDVYNAKHAGENATWMADGTHWPGTWFEPADNHQRGKHAGIVQVLLNHPSCKPRLGLAASAENPVDFSGVDVRLPMLVYISREKRPGYNHQKKAGAMNVMLRVSALLSNAPFVINFDGDHYVNNSQAFRAPMCFMLDGRGRGGENTAFVQFPQRFDDVDPTDRYANHNRVFFDGTMLSLNGLQGPSYLGTGTMFRRVALYGVEPPRWGAAASQIKAMDIANKFGSSTSFVGTMLDGANQERSITPLAVLDESVAGDLAALTACAYEDGTSWGRDVGWVYNIATEDVVTGFRMHRQGWRSVYASVEPAAFRGTAPINLTERLYQILRWSGGSLEMFFSHSNALLAGRRLHPLQRVAYLNMSTYPIVTVFIFFYNLFPVMWLISEQYYIQRPFGEYLLYLVAVIAMIHVIGMFEVKWAGITLLDWCRNEQFYMIGSTGVYPTAVLYMALKLVTGKGIYFRLTSKQTTASSGDKFADLYTVRWVPLLIPTIVIIVVNVAAVGVAVGKAAAWGPLTEPGWLAVLGMVFNVWILVLLYPFALGVMGQWGKRPAVLFVAMAMAVAAVAAMYVAFGAPYQAELSGGAASLGKAAASLTGPSG.

A disordered region spans residues 34 to 53 (AGADGQNGRRSPVAKRVNDG). Helical transmembrane passes span 93–113 (ILHPYRFLILLRLIAIVAFFA) and 123–143 (GVWLWTMSMVGDVWFGFSWVL). Residue Asp-213 is part of the active site. The stretch at 265–293 (ELMSDHRRVRREYEEFKVRIDSLSSTIRQ) forms a coiled coil. Asp-411 and Asp-413 together coordinate substrate. Residue Asp-579 is part of the active site. The next 6 membrane-spanning stretches (helical) occupy residues 655-675 (TYPIVTVFIFFYNLFPVMWLI), 685-705 (FGEYLLYLVAVIAMIHVIGMF), 723-743 (FYMIGSTGVYPTAVLYMALKL), 777-797 (LLIPTIVIIVVNVAAVGVAVG), 811-831 (LAVLGMVFNVWILVLLYPFAL), and 842-862 (AVLFVAMAMAVAAVAAMYVAF).

This sequence belongs to the glycosyltransferase 2 family. Plant cellulose synthase-like F subfamily.

Its subcellular location is the golgi apparatus membrane. Functionally, catalyzes both beta-1,3 and beta-1,4 glycosidic linkage on beta-D-glucan. Essential for (1,3;1,4)-beta-D-glucans synthesis in grasses and cereals (Poaceae). The mixed-linked glucans (which are not present in walls of dicotyledons or most other monocotyledonous plants) are particularly important constituents of the walls of the starchy endosperm and aleurone cells of cereal grains such as oats, wheat, rice and barley. They can account for up to 70% by weight of the wall. This chain is Mixed-linked glucan synthase 2 (CSLF2), found in Oryza sativa subsp. japonica (Rice).